A 523-amino-acid polypeptide reads, in one-letter code: Ribonuclease Y (523 aa).

Residues 3-23 (VWYAIGSIIFGLLVGVSVYLI) traverse the membrane as a helical segment. Residues 213–279 (LVNVINLPND…TKTIEKLVED (67 aa)) enclose the KH domain. In terms of domain architecture, HD spans 339-432 (ALGHSIEVAN…VCAADTLSAA (94 aa)).

The protein belongs to the RNase Y family.

The protein resides in the cell membrane. Functionally, endoribonuclease that initiates mRNA decay. This is Ribonuclease Y from Helicobacter hepaticus (strain ATCC 51449 / 3B1).